A 287-amino-acid chain; its full sequence is Thymidylate synthase (287 aa).

Arg-21 contacts dUMP. Asn-51 contacts (6R)-5,10-methylene-5,6,7,8-tetrahydrofolate. 150–151 contacts dUMP; it reads RR. The Nucleophile role is filled by Cys-170. Residues 190–193, Asn-201, and 231–233 contribute to the dUMP site; these read RSGD and HIY. Asp-193 contributes to the (6R)-5,10-methylene-5,6,7,8-tetrahydrofolate binding site. Ala-286 serves as a coordination point for (6R)-5,10-methylene-5,6,7,8-tetrahydrofolate.

Belongs to the thymidylate synthase family. Bacterial-type ThyA subfamily. Homodimer.

Its subcellular location is the cytoplasm. The enzyme catalyses dUMP + (6R)-5,10-methylene-5,6,7,8-tetrahydrofolate = 7,8-dihydrofolate + dTMP. It participates in pyrimidine metabolism; dTTP biosynthesis. In terms of biological role, catalyzes the reductive methylation of 2'-deoxyuridine-5'-monophosphate (dUMP) to 2'-deoxythymidine-5'-monophosphate (dTMP) while utilizing 5,10-methylenetetrahydrofolate (mTHF) as the methyl donor and reductant in the reaction, yielding dihydrofolate (DHF) as a by-product. This enzymatic reaction provides an intracellular de novo source of dTMP, an essential precursor for DNA biosynthesis. This is Thymidylate synthase from Mycoplasma genitalium (strain ATCC 33530 / DSM 19775 / NCTC 10195 / G37) (Mycoplasmoides genitalium).